The chain runs to 808 residues: Probable inorganic carbon transporter subunit DabA (808 aa).

Zn(2+) contacts are provided by C334, D336, H494, and C509.

The protein belongs to the inorganic carbon transporter (TC 9.A.2) DabA family. As to quaternary structure, forms a complex with DabB. Requires Zn(2+) as cofactor.

The protein resides in the cell inner membrane. Functionally, part of an energy-coupled inorganic carbon pump. This Allorhizobium ampelinum (strain ATCC BAA-846 / DSM 112012 / S4) (Agrobacterium vitis (strain S4)) protein is Probable inorganic carbon transporter subunit DabA.